Consider the following 1070-residue polypeptide: 3',5'-cyclic-AMP phosphodiesterase (1070 aa).

Disordered regions lie at residues 1–91, 166–215, 487–516, and 615–653; these read MSQE…KQDS, STSI…TRFQ, VPAS…LSQG, and SAGQ…RLPT. Positions 51 to 69 are enriched in low complexity; the sequence is KQVQVQSQKFSSTSSTTKV. Positions 70-84 are enriched in polar residues; it reads ATHSFSMSSSAGTTG. Over residues 166–210 the composition is skewed to low complexity; sequence STSIITSSEQRTSTSTSSSSSTRYIASGSSNLAGGNSNSASSASS. Polar residues predominate over residues 488–506; sequence PASNKSRRPNQSSSASRSG. The PDEase domain maps to 656 to 985; that stretch reads VETPRENELG…DYYQSMIPPS (330 aa). The Proton donor role is filled by histidine 732. 732–736 contributes to the 3',5'-cyclic AMP binding site; it reads HNSLH. The a divalent metal cation site is built by histidine 736, histidine 772, aspartate 773, and aspartate 890. 3',5'-cyclic AMP-binding residues include aspartate 773, aspartate 890, and glutamine 941. The segment covering 1007–1024 has biased composition (acidic residues); it reads EESDQENLAELEEGDESG. The disordered stretch occupies residues 1007-1070; it reads EESDQENLAE…CQNQPQHGGM (64 aa). Low complexity predominate over residues 1025 to 1042; it reads GESTTTGTTGTTAASALS. Residues 1043–1054 are compositionally biased toward gly residues; that stretch reads GAGGGGGGGGGM. The span at 1060–1070 shows a compositional bias: polar residues; sequence GCQNQPQHGGM.

Belongs to the cyclic nucleotide phosphodiesterase family. PDE4 subfamily. In terms of assembly, monomer. It depends on a divalent metal cation as a cofactor.

It carries out the reaction 3',5'-cyclic AMP + H2O = AMP + H(+). It functions in the pathway purine metabolism; 3',5'-cyclic AMP degradation; AMP from 3',5'-cyclic AMP: step 1/1. In terms of biological role, hydrolyzes the second messenger cAMP, which is a key regulator of many important physiological processes. Vital for female fertility. Required for learning/memory. The polypeptide is 3',5'-cyclic-AMP phosphodiesterase (dnc) (Drosophila melanogaster (Fruit fly)).